A 343-amino-acid polypeptide reads, in one-letter code: MGEYIMEKNTIILGIETSCDETAVAVVKNGTEIIANVVASQIESHKRFGGVVPEIASRHHVEEITVVLEEALKEANITFDDIDAIAVTEGPGLVGALLIGVNAAKAVAFAHDIPLVGVHHIAGHIYANRLVKEVQFPLLSLVVSGGHTELVYMKEHGSFEVIGETRDDAAGEAYDKVARTLSMPYPGGPHIDRLAHEGKPTIDLPRAWLEPDSYDFSFSGLKSAVINTVHNAKQRGIEIAPEDLAASFQESVIDVLVTKASRAADAYNVKQVLLAGGVAANKGLRARLEAEFAQKENVELIIPPLSLCTDNAAMIAAAGTIAYEQGKRATLALNANPGLDIEA.

The Fe cation site is built by H120 and H124. Residues 142–146 (VVSGG), D175, G188, D192, and N281 each bind substrate. D310 is a binding site for Fe cation.

It belongs to the KAE1 / TsaD family. Fe(2+) is required as a cofactor.

It localises to the cytoplasm. It carries out the reaction L-threonylcarbamoyladenylate + adenosine(37) in tRNA = N(6)-L-threonylcarbamoyladenosine(37) in tRNA + AMP + H(+). Required for the formation of a threonylcarbamoyl group on adenosine at position 37 (t(6)A37) in tRNAs that read codons beginning with adenine. Is involved in the transfer of the threonylcarbamoyl moiety of threonylcarbamoyl-AMP (TC-AMP) to the N6 group of A37, together with TsaE and TsaB. TsaD likely plays a direct catalytic role in this reaction. The sequence is that of tRNA N6-adenosine threonylcarbamoyltransferase from Bacillus thuringiensis (strain Al Hakam).